Reading from the N-terminus, the 407-residue chain is MDYNLALDTALNRLHTEGRYRTFIDIERRKGAFPKAMWRKPDGSEKEITVWCGNDYLGMGQHPVVLGAMHEALDSTGAGSGGTRNISGTTLYHKRLEAELADLHGKEAALVFSSAYIANDATLSTLPQLIPGLVIVSDKLNHASMIEGIRRSGTEKHIFKHNDLDDLRRILTSIGKDRPILVAFESVYSMDGDFGRIEEICDIADEFGALKYIDEVHAVGMYGPRGGGVAERDGLMDRIDIINGTLGKAYGVFGGYIAASSKMCDAVRSYAPGFIFSTSLPPVVAAGAAASVRHLKGDVELREKHQTQARILKMRLKGLGLPIIDHGSHIVPVHVGDPVHCKMISDMLLEHFGIYVQPINFPTVPRGTERLRFTPSPVHDSGMIDHLVKAMDVLWQHCALNRAEVVA.

Substrate-binding residues include Arg21, Ser137, and Lys156. Pyridoxal 5'-phosphate is bound by residues Ser189, His217, and Thr245. The active site involves Lys248. The residue at position 248 (Lys248) is an N6-(pyridoxal phosphate)lysine. The pyridoxal 5'-phosphate site is built by Ser277 and Thr278. Thr363 is a substrate binding site.

It belongs to the class-II pyridoxal-phosphate-dependent aminotransferase family. Homodimer. Requires pyridoxal 5'-phosphate as cofactor.

The catalysed reaction is succinyl-CoA + glycine + H(+) = 5-aminolevulinate + CO2 + CoA. It participates in porphyrin-containing compound metabolism; protoporphyrin-IX biosynthesis; 5-aminolevulinate from glycine: step 1/1. This chain is 5-aminolevulinate synthase 1 (hemA), found in Cereibacter sphaeroides (strain ATCC 17023 / DSM 158 / JCM 6121 / CCUG 31486 / LMG 2827 / NBRC 12203 / NCIMB 8253 / ATH 2.4.1.) (Rhodobacter sphaeroides).